Here is a 201-residue protein sequence, read N- to C-terminus: ATP-dependent Clp protease proteolytic subunit 1 (201 aa).

The active-site Nucleophile is Ser102. His127 is a catalytic residue.

This sequence belongs to the peptidase S14 family. Fourteen ClpP subunits assemble into 2 heptameric rings which stack back to back to give a disk-like structure with a central cavity, resembling the structure of eukaryotic proteasomes.

It localises to the cytoplasm. The catalysed reaction is Hydrolysis of proteins to small peptides in the presence of ATP and magnesium. alpha-casein is the usual test substrate. In the absence of ATP, only oligopeptides shorter than five residues are hydrolyzed (such as succinyl-Leu-Tyr-|-NHMec, and Leu-Tyr-Leu-|-Tyr-Trp, in which cleavage of the -Tyr-|-Leu- and -Tyr-|-Trp bonds also occurs).. Its function is as follows. Cleaves peptides in various proteins in a process that requires ATP hydrolysis. Has a chymotrypsin-like activity. Plays a major role in the degradation of misfolded proteins. This Mesorhizobium japonicum (strain LMG 29417 / CECT 9101 / MAFF 303099) (Mesorhizobium loti (strain MAFF 303099)) protein is ATP-dependent Clp protease proteolytic subunit 1.